Consider the following 199-residue polypeptide: 5'-deoxynucleotidase YfbR (199 aa).

Substrate contacts are provided by residues 18–19 (RW) and His33. The 113-residue stretch at 30–142 (VSEHSLQVAM…VKQADALCAY (113 aa)) folds into the HD domain. A divalent metal cation contacts are provided by His33, His68, and Asp69. Residues Asp69, 77-80 (DLPT), and Asp137 each bind substrate. Position 137 (Asp137) interacts with a divalent metal cation.

Belongs to the 5DNU family. Homodimer. Requires a divalent metal cation as cofactor.

It localises to the cytoplasm. It carries out the reaction a 2'-deoxyribonucleoside 5'-phosphate + H2O = a 2'-deoxyribonucleoside + phosphate. Catalyzes the strictly specific dephosphorylation of 2'-deoxyribonucleoside 5'-monophosphates. This Salmonella arizonae (strain ATCC BAA-731 / CDC346-86 / RSK2980) protein is 5'-deoxynucleotidase YfbR.